A 404-amino-acid chain; its full sequence is MYKNQLQELAQRSCFSLPSYVCTREGPDHAPRFKATVTFNGETFDGPSNCTTLRQAEHAAAEVALARLSLRGPSSSLTARVLDETGVYKNLLQETAHRAGLKLPVYTTVRSGPGHSPVFSSTVELAGMSFAGDPAKTKKHAEKNAAMAAWSSLKQSNIRTTVSPLVFDLVWIVCHGGDVFVVVWCSAGGAQGARRRRRRGAGACGRRQGARRAEAAGRLRRRRWRREGGGGVSTEEASRRRVLFVRHVAVQTSMGASVAAAAGGRTQDTASPAPAAAAASGGVRLPSRRRRAGARAEEGRRAGAHAARRHAARQGGRRNAAADAVLLRAVLPPRRRRRPDEALRRRRRVPRAAGGERPFSDPGLRRATVAAAAAAQGGRSSDLIQEGVVVVKTSIQSIAQPAPI.

DRBM domains follow at residues 1–70 (MYKN…RLSL) and 87–155 (VYKN…SLKQ). 3 disordered regions span residues 195-236 (RRRR…STEE), 263-320 (GGRT…RRNA), and 336-362 (RRRP…FSDP). Positions 263-280 (GGRTQDTASPAPAAAAAS) are enriched in low complexity. Basic residues predominate over residues 302-316 (AGAHAARRHAARQGG).

Functionally, binds double-stranded RNA. The polypeptide is Double-stranded RNA-binding protein 5 (DRB5) (Oryza sativa subsp. japonica (Rice)).